We begin with the raw amino-acid sequence, 3907 residues long: MEDEERQKKLEAGKAKLAQFRQRKAQSDGQSPSKKQKKKRKTSSSKHDVSAHHDLNIDQSQCNEMYINSSQRVESTVIPESTIMRTLHSGEITSHEQGFSVELESEISTTADDCSSEVNGCSFVMRTGKPTNLLREEEFGVDDSYSEQGAQDSPTHLEMMESELAGKQHEIEELNRELEEMRVTYGTEGLQQLQEFEAAIKQRDGIITQLTANLQQARREKDETMREFLELTEQSQKLQIQFQQLQASETLRNSTHSSTAADLLQAKQQILTHQQQLEEQDHLLEDYQKKKEDFTMQISFLQEKIKVYEMEQDKKVENSNKEEIQEKETIIEELNTKIIEEEKKTLELKDKLTTADKLLGELQEQIVQKNQEIKNMKLELTNSKQKERQSSEEIKQLMGTVEELQKRNHKDSQFETDIVQRMEQETQRKLEQLRAELDEMYGQQIVQMKQELIRQHMAQMEEMKTRHKGEMENALRSYSNITVNEDQIKLMNVAINELNIKLQDTNSQKEKLKEELGLILEEKCALQRQLEDLVEELSFSREQIQRARQTIAEQESKLNEAHKSLSTVEDLKAEIVSASESRKELELKHEAEVTNYKIKLEMLEKEKNAVLDRMAESQEAELERLRTQLLFSHEEELSKLKEDLEIEHRINIEKLKDNLGIHYKQQIDGLQNEMSQKIETMQFEKDNLITKQNQLILEISKLKDLQQSLVNSKSEEMTLQINELQKEIEILRQEEKEKGTLEQEVQELQLKTELLEKQMKEKENDLQEKFAQLEAENSILKDEKKTLEDMLKIHTPVSQEERLIFLDSIKSKSKDSVWEKEIEILIEENEDLKQQCIQLNEEIEKQRNTFSFAEKNFEVNYQELQEEYACLLKVKDDLEDSKNKQELEYKSKLKALNEELHLQRINPTTVKMKSSVFDEDKTFVAETLEMGEVVEKDTTELMEKLEVTKREKLELSQRLSDLSEQLKQKHGEISFLNEEVKSLKQEKEQVSLRCRELEIIINHNRAENVQSCDTQVSSLLDGVVTMTSRGAEGSVSKVNKSFGEESKIMVEDKVSFENMTVGEESKQEQLILDHLPSVTKESSLRATQPSENDKLQKELNVLKSEQNDLRLQMEAQRICLSLVYSTHVDQVREYMENEKDKALCSLKEELIFAQEEKIKELQKIHQLELQTMKTQETGDEGKPLHLLIGKLQKAVSEECSYFLQTLCSVLGEYYTPALKCEVNAEDKENSGDYISENEDPELQDYRYEVQDFQENMHTLLNKVTEEYNKLLVLQTRLSKIWGQQTDGMKLEFGEENLPKEETEFLSIHSQMTNLEDIDVNHKSKLSSLQDLEKTKLEEQVQELESLISSLQQQLKETEQNYEAEIHCLQKRLQAVSESTVPPSLPVDSVVITESDAQRTMYPGSCVKKNIDGTIEFSGEFGVKEETNIVKLLEKQYQEQLEEEVAKVIVSMSIAFAQQTELSRISGGKENTASSKQAHAVCQQEQHYFNEMKLSQDQIGFQTFETVDVKFKEEFKPLSKELGEHGKEILLSNSDPHDIPESKDCVLTISEEMFSKDKTFIVRQSIHDEISVSSMDASRQLMLNEEQLEDMRQELVRQYQEHQQATELLRQAHMRQMERQREDQEQLQEEIKRLNRQLAQRSSIDNENLVSERERVLLEELEALKQLSLAGREKLCCELRNSSTQTQNGNENQGEVEEQTFKEKELDRKPEDVPPEILSNERYALQKANNRLLKILLEVVKTTAAVEETIGRHVLGILDRSSKSQSSASLIWRSEAEASVKSCVHEEHTRVTDESIPSYSGSDMPRNDINMWSKVTEEGTELSQRLVRSGFAGTEIDPENEELMLNISSRLQAAVEKLLEAISETSSQLEHAKVTQTELMRESFRQKQEATESLKCQEELRERLHEESRAREQLAVELSKAEGVIDGYADEKTLFERQIQEKTDIIDRLEQELLCASNRLQELEAEQQQIQEERELLSRQKEAMKAEAGPVEQQLLQETEKLMKEKLEVQCQAEKVRDDLQKQVKALEIDVEEQVSRFIELEQEKNTELMDLRQQNQALEKQLEKMRKFLDEQAIDREHERDVFQQEIQKLEQQLKVVPRFQPISEHQTREVEQLANHLKEKTDKCSELLLSKEQLQRDIQERNEEIEKLEFRVRELEQALLVSADTFQKVEDRKHFGAVEAKPELSLEVQLQAERDAIDRKEKEITNLEEQLEQFREELENKNEEVQQLHMQLEIQKKESTTRLQELEQENKLFKDDMEKLGLAIKESDAMSTQDQHVLFGKFAQIIQEKEVEIDQLNEQVTKLQQQLKITTDNKVIEEKNELIRDLETQIECLMSDQECVKRNREEEIEQLNEVIEKLQQELANIGQKTSMNAHSLSEEADSLKHQLDVVIAEKLALEQQVETANEEMTFMKNVLKETNFKMNQLTQELFSLKRERESVEKIQSIPENSVNVAIDHLSKDKPELEVVLTEDALKSLENQTYFKSFEENGKGSIINLETRLLQLESTVSAKDLELTQCYKQIKDMQEQGQFETEMLQKKIVNLQKIVEEKVAAALVSQIQLEAVQEYAKFCQDNQTISSEPERTNIQNLNQLREDELGSDISALTLRISELESQVVEMHTSLILEKEQVEIAEKNVLEKEKKLLELQKLLEGNEKKQREKEKKRSPQDVEVLKTTTELFHSNEESGFFNELEALRAESVATKAELASYKEKAEKLQEELLVKETNMTSLQKDLSQVRDHLAEAKEKLSILEKEDETEVQESKKACMFEPLPIKLSKSIASQTDGTLKISSSNQTPQILVKNAGIQINLQSECSSEEVTEIISQFTEKIEKMQELHAAEILDMESRHISETETLKREHYVAVQLLKEECGTLKAVIQCLRSKEGSSIPELAHSDAYQTREICSSDSGSDWGQGIYLTHSQGFDIASEGRGEESESATDSFPKKIKGLLRAVHNEGMQVLSLTESPYSDGEDHSIQQVSEPWLEERKAYINTISSLKDLITKMQLQREAEVYDSSQSHESFSDWRGELLLALQQVFLEERSVLLAAFRTELTALGTTDAVGLLNCLEQRIQEQGVEYQAAMECLQKADRRSLLSEIQALHAQMNGRKITLKREQESEKPSQELLEYNIQQKQSQMLEMQVELSSMKDRATELQEQLSSEKMVVAELKSELAQTKLELETTLKAQHKHLKELEAFRLEVKDKTDEVHLLNDTLASEQKKSRELQWALEKEKAKLGRSEERDKEELEDLKFSLESQKQRNLQLNLLLEQQKQLLNESQQKIESQRMLYDAQLSEEQGRNLELQVLLESEKVRIREMSSTLDRERELHAQLQSSDGTGQSRPPLPSEDLLKELQKQLEEKHSRIVELLNETEKYKLDSLQTRQQMEKDRQVHRKTLQTEQEANTEGQKKMHELQSKVEDLQRQLEEKRQQVYKLDLEGQRLQGIMQEFQKQELEREEKRESRRILYQNLNEPTTWSLTSDRTRNWVLQQKIEGETKESNYAKLIEMNGGGTGCNHELEMIRQKLQCVASKLQVLPQKASERLQFETADDEDFIWVQENIDEIILQLQKLTGQQGEEPSLVSPSTSCGSLTERLLRQNAELTGHISQLTEEKNDLRNMVMKLEEQIRWYRQTGAGRDNSSRFSLNGGANIEAIIASEKEVWNREKLTLQKSLKRAEAEVYKLKAELRNDSLLQTLSPDSEHVTLKRIYGKYLRAESFRKALIYQKKYLLLLLGGFQECEDATLALLARMGGQPAFTDLEVITNRPKGFTRFRSAVRVSIAISRMKFLVRRWHRVTGSVSININRDGFGLNQGAEKTDSFYHSSGGLELYGEPRHTTYRSRSDLDYIRSPLPFQNRYPGTPADFNPGSLACSQLQNYDPDRALTDYITRLEALQRRLGTIQSGSTTQFHAGMRR.

Residues 1 to 14 (MEDEERQKKLEAGK) are compositionally biased toward basic and acidic residues. Positions 1–57 (MEDEERQKKLEAGKAKLAQFRQRKAQSDGQSPSKKQKKKRKTSSSKHDVSAHHDLNI) are disordered. Residues 34-44 (KKQKKKRKTSS) show a composition bias toward basic residues. Residues 45-56 (SKHDVSAHHDLN) show a composition bias toward basic and acidic residues. Coiled-coil stretches lie at residues 152–902 (DSPT…ELHL), 932–1010 (EVVE…ENVQ), 1088–1173 (QPSE…QTMK), 1241–1268 (ELQD…EEYN), 1324–1380 (KLSS…ESTV), 1422–1447 (VKEE…VAKV), and 1573–1647 (SMDA…DNEN). Phosphoserine is present on Ser-153. Ser-1327 carries the phosphoserine modification. Residues 1682–1692 (STQTQNGNENQ) show a composition bias toward low complexity. The tract at residues 1682–1713 (STQTQNGNENQGEVEEQTFKEKELDRKPEDVP) is disordered. Basic and acidic residues predominate over residues 1698–1711 (QTFKEKELDRKPED). At Ser-1765 the chain carries Phosphoserine. 6 coiled-coil regions span residues 1845-2443 (NISS…VEKI), 2532-2549 (ETEM…IVEE), 2591-2764 (QLRE…SKKA), 3061-3088 (LNCL…ADRR), 3120-3466 (ELLE…NLNE), and 3583-3685 (SLTE…NDSL). Positions 2542–2555 (NLQKIVEEKVAAAL) are PKA-RII subunit binding domain. A disordered region spans residues 3377–3405 (RQQMEKDRQVHRKTLQTEQEANTEGQKKM). 4 positions are modified to phosphoserine: Ser-3690, Ser-3842, Ser-3865, and Ser-3897.

Interacts with the regulatory region of protein kinase N (PKN), protein phosphatase 2A (PP2A), protein phosphatase 1 (PP1) and the immature non-phosphorylated form of PKC epsilon. Interacts with CIP4 and FNBP1. Interacts with chloride intracellular channel proteins CLIC1, CLIC4 and CLIC5. CSNK1D binding promotes its centrosomal subcellular location. Interacts with GM130/GOLGA2; leading to recruitment to the Golgi apparatus. Interacts with KCNQ1; targets protein kinase A (PKA) catalytic and regulatory subunits and protein phosphatase 1 (PP1), to the heterodimer KCNQ1-KCNE1. Interacts with PDE4DIP isoform 13/MMG8/SMYLE; this interaction stabilizes both proteins. In complex with PDE4DIP isoform 13, recruits CAMSAP2 to the Golgi apparatus. Forms a pericentrosomal complex with CDK5RAP2, EB1/MAPRE1 and PDE4DIP isoform 13; within this complex, MAPRE1 binding to CDK5RAP2 may be mediated by PDE4DIP. Interacts with MAPRE1 and MAPRE3. Interacts (via C-terminus) with CAMSAP2; this interaction is much stronger in the presence of PDE4DIP isoform 13/MMG8/SMYLE. Interacts with CAMSAP3. Interacts (via C-terminus) with the gamma-tubulin ring complex (gamma-TuRC), composed of gamma-tubulin, TUBGCP2, TUBGCP3, TUBGCP4, TUBGCP5 and TUBGCP6. As to expression, widely expressed. Isoform 4: Highly expressed in skeletal muscle and in pancreas.

It is found in the golgi apparatus. The protein resides in the cytoplasm. The protein localises to the cytoskeleton. It localises to the microtubule organizing center. Its subcellular location is the centrosome. Functionally, scaffolding protein that assembles several protein kinases and phosphatases on the centrosome and Golgi apparatus. Required to maintain the integrity of the Golgi apparatus. Required for microtubule nucleation at the cis-side of the Golgi apparatus. Required for association of the centrosomes with the poles of the bipolar mitotic spindle during metaphase. In complex with PDE4DIP isoform 13/MMG8/SMYLE, recruits CAMSAP2 to the Golgi apparatus and tethers non-centrosomal minus-end microtubules to the Golgi, an important step for polarized cell movement. In complex with PDE4DIP isoform 13/MMG8/SMYLE, EB1/MAPRE1 and CDK5RAP2, contributes to microtubules nucleation and extension also from the centrosome to the cell periphery. Associated with the N-methyl-D-aspartate receptor and is specifically found in the neuromuscular junction (NMJ) as well as in neuronal synapses, suggesting a role in the organization of postsynaptic specializations. This is A-kinase anchor protein 9 (AKAP9) from Homo sapiens (Human).